The following is a 131-amino-acid chain: Ribonuclease P protein component (131 aa).

It belongs to the RnpA family. As to quaternary structure, consists of a catalytic RNA component (M1 or rnpB) and a protein subunit.

It catalyses the reaction Endonucleolytic cleavage of RNA, removing 5'-extranucleotides from tRNA precursor.. Its function is as follows. RNaseP catalyzes the removal of the 5'-leader sequence from pre-tRNA to produce the mature 5'-terminus. It can also cleave other RNA substrates such as 4.5S RNA. The protein component plays an auxiliary but essential role in vivo by binding to the 5'-leader sequence and broadening the substrate specificity of the ribozyme. In Stutzerimonas stutzeri (strain A1501) (Pseudomonas stutzeri), this protein is Ribonuclease P protein component.